Here is a 507-residue protein sequence, read N- to C-terminus: Maturase K (507 aa).

It belongs to the intron maturase 2 family. MatK subfamily.

It is found in the plastid. The protein resides in the chloroplast. In terms of biological role, usually encoded in the trnK tRNA gene intron. Probably assists in splicing its own and other chloroplast group II introns. The polypeptide is Maturase K (Ranunculus repens (Creeping buttercup)).